The sequence spans 74 residues: Consomatin Ma1 (74 aa).

The N-terminal stretch at 1 to 22 (MQTAYWVMVMMMVWITAPLSEG) is a signal peptide. A propeptide spanning residues 23 to 57 (GKLNGEIRGLVSHILIPQHTLRSLTSRDRSDNGGS) is cleaved from the precursor. Cys63 and Cys68 form a disulfide bridge. Trp65 bears the D-tryptophan mark. 4-hydroxyproline occurs at positions 69, 70, and 72.

It belongs to the conotoxin C superfamily. Consomatin family. Expressed by the venom duct.

It localises to the secreted. Functionally, moderately activates human somatostatin receptors (SSTR) with a preferential activation of SSTR1 and SSTR4. In vivo, does not cause behavioral changes in mice within a few minutes of intracranial injection, but causes a progressive loss of movement thereafter. Four to five hours after injection, mice recover, even with the highest dose tested. Shows antinociception and antihyperalgesia activities in two mouse models of acute pain, most probably by acting outside the central nervous system. This is Consomatin Ma1 from Conus magus (Magical cone).